We begin with the raw amino-acid sequence, 446 residues long: MKNSSSMLKGVKSFIGSGIYTNKPIYDVAIVGGGIVGLATGRELLKRNPKLKIVILEKENEIAPHQSSHNSGVIHCGIYYKPGSLRAKLCTKGSKLMYDYCNENQINYENCGKLIVATKKEEFQQLEQLYKRGIENGVPNIKLLESKEQLLSIEPFINGGLRAIHTPSTGIIDYKEVSKSFGNDITEKFGKDSKSEIKLNFNAKNFKYNSNDKLLLISTGDDDDDEEQQQSILTKYSIVCGGMNSDRIAKVAYGNDEPSIVPFRGSFLQFKPEFRHLIKGNVYPLPNASFPFLGVHFTKRINGEVWLGPNAVLSFDREGYKFTDFNLHDTIDLIKNPGLFKLAKKHWKYGLGELYRDFNKDHFIQLLKPYMPNITVDMLEYGGSGVRSQAISKSGDLIEDFIFDTPSDVPIIHVRNSPSPAATSSLAIAIEIVDLAQNNFKNLNSL.

Residues 1–28 (MKNSSSMLKGVKSFIGSGIYTNKPIYDV) constitute a mitochondrion transit peptide.

It belongs to the L2HGDH family. It depends on FAD as a cofactor.

It localises to the mitochondrion. The catalysed reaction is (S)-2-hydroxyglutarate + A = 2-oxoglutarate + AH2. The sequence is that of L-2-hydroxyglutarate dehydrogenase, mitochondrial (l2hgdh) from Dictyostelium discoideum (Social amoeba).